The chain runs to 118 residues: Protein TusC (118 aa).

This sequence belongs to the DsrF/TusC family. In terms of assembly, heterohexamer, formed by a dimer of trimers. The hexameric TusBCD complex contains 2 copies each of TusB, TusC and TusD. The TusBCD complex interacts with TusE.

It localises to the cytoplasm. Its function is as follows. Part of a sulfur-relay system required for 2-thiolation of 5-methylaminomethyl-2-thiouridine (mnm(5)s(2)U) at tRNA wobble positions. This Salmonella typhi protein is Protein TusC.